The sequence spans 74 residues: Cytochrome c oxidase assembly factor 5 (74 aa).

One can recognise a CHCH domain in the interval 27 to 65 (QSDCVLKEGKSPRQCLKEGNCKALKYSFFECKRSMLDAR). The short motif at 30–41 (CVLKEGKSPRQC) is the Cx10C motif element. 2 disulfides stabilise this stretch: cysteine 30–cysteine 57 and cysteine 41–cysteine 47. The residue at position 37 (serine 37) is a Phosphoserine. The short motif at 47–57 (CKALKYSFFEC) is the Cx9C motif element.

It belongs to the PET191 family.

Its function is as follows. Involved in an early step of the mitochondrial complex IV assembly process. The chain is Cytochrome c oxidase assembly factor 5 (COA5) from Bos taurus (Bovine).